The sequence spans 589 residues: Kelch-like protein 25 (589 aa).

One can recognise a BTB domain in the interval Thr46–Glu114. The region spanning Cys149 to Val250 is the BACK domain. 6 Kelch repeats span residues Thr296–Cys340, Lys341–Asn388, Cys389–Leu444, Leu446–Ser492, Ile494–Asn538, and Lys539–Lys585.

As to quaternary structure, component of the BCR(KLHL25) E3 ubiquitin ligase complex, at least composed of cul3, klhl25 and rbx1.

The protein operates within protein modification; protein ubiquitination. Substrate-specific adapter of a BCR (BTB-CUL3-RBX1) E3 ubiquitin ligase complex involved in various processes, such as translation homeostasis and lipid synthesis. The BCR(KLHL25) ubiquitin ligase complex acts by mediating ubiquitination of hypophosphorylated eif4ebp1 (4E-BP1): ubiquitination and subsequent degradation of hypophosphorylated EIF4EBP1 (4E-BP1) probably serves as a homeostatic mechanism to maintain translation and prevent eIF4E inhibition when eIF4E levels are low. The BCR(KLHL25) complex also acts as a regulator of lipid synthesis by mediating ubiquitination and degradation of ACLY, thereby inhibiting lipid synthesis. This is Kelch-like protein 25 from Xenopus laevis (African clawed frog).